A 381-amino-acid polypeptide reads, in one-letter code: Subtilisin J (381 aa).

A signal peptide spans 1-29 (MRSKKLWISLLFALTLIFTMAFSNMSVQA). The propeptide occupies 30–106 (AGKSSTEKKY…VEEDHIAHEY (77 aa)). Residues 38–103 (KYIVGFKQTM…VAYVEEDHIA (66 aa)) form the Inhibitor I9 domain. Gln108 serves as a coordination point for Ca(2+). In terms of domain architecture, Peptidase S8 spans 111–380 (PYGISQIKAP…KGLINVQAAA (270 aa)). Asp138 (charge relay system) is an active-site residue. Residue Asp147 coordinates Ca(2+). The active-site Charge relay system is His170. The Ca(2+) site is built by Leu181, Asn183, Ile185, Val187, Ala275, Tyr277, and Thr280. Ser327 (charge relay system) is an active-site residue.

It belongs to the peptidase S8 family. The cofactor is Ca(2+).

It localises to the secreted. The enzyme catalyses Hydrolysis of proteins with broad specificity for peptide bonds, and a preference for a large uncharged residue in P1. Hydrolyzes peptide amides.. In terms of biological role, subtilisin is an extracellular alkaline serine protease, it catalyzes the hydrolysis of proteins and peptide amides. The protein is Subtilisin J (aprJ) of Geobacillus stearothermophilus (Bacillus stearothermophilus).